We begin with the raw amino-acid sequence, 351 residues long: Translation initiation factor eIF2B subunit beta (351 aa).

It belongs to the eIF-2B alpha/beta/delta subunits family. Component of the translation initiation factor 2B (eIF2B) complex which is a heterodecamer of two sets of five different subunits: alpha, beta, gamma, delta and epsilon. Subunits alpha, beta and delta comprise a regulatory subcomplex and subunits epsilon and gamma comprise a catalytic subcomplex. Within the complex, the hexameric regulatory complex resides at the center, with the two heterodimeric catalytic subcomplexes bound on opposite sides.

It is found in the cytoplasm. The protein resides in the cytosol. Activated by the chemical integrated stress response (ISR) inhibitor ISRIB which stimulates guanine nucleotide exchange factor activity for both phosphorylated and unphosphorylated eIF2. In terms of biological role, acts as a component of the translation initiation factor 2B (eIF2B) complex, which catalyzes the exchange of GDP for GTP on eukaryotic initiation factor 2 (eIF2) gamma subunit. Its guanine nucleotide exchange factor activity is repressed when bound to eIF2 complex phosphorylated on the alpha subunit, thereby limiting the amount of methionyl-initiator methionine tRNA available to the ribosome and consequently global translation is repressed. The chain is Translation initiation factor eIF2B subunit beta (EIF2B2) from Bos taurus (Bovine).